Here is a 298-residue protein sequence, read N- to C-terminus: Glycine--tRNA ligase alpha subunit (298 aa).

This sequence belongs to the class-II aminoacyl-tRNA synthetase family. Tetramer of two alpha and two beta subunits.

The protein localises to the cytoplasm. It catalyses the reaction tRNA(Gly) + glycine + ATP = glycyl-tRNA(Gly) + AMP + diphosphate. The polypeptide is Glycine--tRNA ligase alpha subunit (Helicobacter pylori (strain G27)).